Reading from the N-terminus, the 223-residue chain is Urease accessory protein UreF (223 aa).

This sequence belongs to the UreF family. As to quaternary structure, ureD, UreF and UreG form a complex that acts as a GTP-hydrolysis-dependent molecular chaperone, activating the urease apoprotein by helping to assemble the nickel containing metallocenter of UreC. The UreE protein probably delivers the nickel.

It is found in the cytoplasm. Required for maturation of urease via the functional incorporation of the urease nickel metallocenter. The chain is Urease accessory protein UreF from Rhizobium etli (strain CIAT 652).